We begin with the raw amino-acid sequence, 536 residues long: Testis-specific protein 10-interacting protein (536 aa).

Disordered regions lie at residues 1-94, 185-234, and 246-305; these read MLNT…LFSS, SQGL…PGQG, and MEEE…FKGP. Residues 48 to 64 are compositionally biased toward low complexity; the sequence is SGDSLQSQSCQQQRSYS. The segment covering 71 to 83 has biased composition (basic residues); that stretch reads KERKPRRRNKKGR. A coiled-coil region spans residues 375-451; the sequence is QAWEQQQLKE…LQGIQHRVQA (77 aa). A disordered region spans residues 491 to 536; sequence GNAEGIPRKHRSYRSFGVEMESSPQSPPKTEPTSSQPGRHPSPTLD.

In Rattus norvegicus (Rat), this protein is Testis-specific protein 10-interacting protein (Tsga10ip).